We begin with the raw amino-acid sequence, 479 residues long: Leucine-rich repeat-containing protein 74A (479 aa).

Over residues 1–10 (MDDDDIEPLE) the composition is skewed to acidic residues. The interval 1–29 (MDDDDIEPLEYETKDETEAALAPQSSEDT) is disordered. 8 LRR repeats span residues 119-140 (TVLKLELEDNSIQEEGILSLME), 147-167 (YLQELNVSDNNLGLEGARIIS), 176-197 (SLWKLKLSGNKFKEECALLLCQ), 204-225 (RIRSLNLSHNEFSDTAGEYLGQ), 232-253 (GLQSLNLSWNHFNVRGAVALCN), 260-281 (TLKKLDVSMNGFGNDGALALGD), 288-309 (CLVYVDVSRNGITNEGASRISK), and 316-336 (CLQVLKLFLNPVSLEGAYSLI).

The polypeptide is Leucine-rich repeat-containing protein 74A (Rattus norvegicus (Rat)).